A 263-amino-acid chain; its full sequence is Methylesterase 1 (263 aa).

The active-site Acyl-ester intermediate is the serine 85. Residues aspartate 213 and histidine 241 each act as charge relay system in the active site.

Belongs to the AB hydrolase superfamily. Methylesterase family.

The enzyme catalyses methyl (indol-3-yl)acetate + H2O = (indol-3-yl)acetate + methanol + H(+). It catalyses the reaction methyl (-)-jasmonate + H2O = jasmonate + methanol + H(+). It carries out the reaction methyl salicylate + H2O = salicylate + methanol + H(+). It participates in plant hormone biosynthesis. The protein operates within lipid metabolism; oxylipin biosynthesis. With respect to regulation, esterase activity is down-regulated by salicylic acid (SA). Its function is as follows. Methylesterase shown to have carboxylesterase activity, methyl indole-3-acetic acid (MeIAA) esterase activity, methyl salicylate (MeSA) esterase activity and methyl jasmonate (MeJA) esterase activity in vitro. Required to convert methyl salicylate (MeSA) to salicylic acid (SA) as part of the signal transduction pathways that activate systemic acquired resistance in systemic tissue. MeSA is believed to be an inactive form that needs to be demethylated to exert a biological effect. This Arabidopsis thaliana (Mouse-ear cress) protein is Methylesterase 1.